Here is a 106-residue protein sequence, read N- to C-terminus: Ig kappa-b4 chain C region (106 aa).

Positions 6 to 99 constitute an Ig-like domain; it reads PSVLLFPPSK…VQGSASPIVQ (94 aa). Cysteines 27 and 87 form a disulfide. Residues 48 to 64 are compositionally biased toward polar residues; sequence QQSGIENSKTPQSPEDN. The interval 48–67 is disordered; it reads QQSGIENSKTPQSPEDNTYS.

The protein is Ig kappa-b4 chain C region (K-BAS) of Oryctolagus cuniculus (Rabbit).